The sequence spans 422 residues: MFVNTVIAFIIIFGTLVFFHELGHLLLAQRAGILCREFAIGFGPKIFSFKKNETVYTIRLLPVGGFVRMAGEDPEMIEVKPGYTVGLLFNKEDQVEKVIINQKEKYPDALVIEVETADLEHDMKITGYEQGKEDELSSFTVSETSFFIVDGEEVQIAPYNRQFGSKPVWQRIKAIAAGPIMNFILAYVILVMLGLIQGVPSNEPMLGQLTDNGRAAEAGLKEGDYIQSINGEKMRSWTDIVSAVKENPEKEMDVAVKRDNKTLHISVTPEAVKDENKKTIGRFGSYAPTEKGVLSAVAYGATSTVDVTKAILTNLSKLVTGQFKLDMLSGPVGIYDMTDQVAKTGIVNLFQFAAFLSINLGIVNLLPIPALDGGRLLFLFIEAIRGKPINREKEAFVVFIGVAFLMLLMLVVTWNDIQRLFL.

Helical transmembrane passes span 6 to 26 (VIAF…GHLL), 175 to 195 (IAAG…MLGL), 346 to 366 (IVNL…VNLL), and 394 to 414 (EAFV…VVTW). H20 provides a ligand contact to Zn(2+). The active site involves E21. Residue H24 participates in Zn(2+) binding. Residues 186–271 (AYVILVMLGL…TLHISVTPEA (86 aa)) form the PDZ domain.

The protein belongs to the peptidase M50B family. Zn(2+) is required as a cofactor.

It localises to the cell membrane. Its function is as follows. Is responsible for site-2 cleavage of the RsiW anti-sigma factor. This results, after a third proteolytic step catalyzed by the ClpXP protease, in the release of SigW and the transcription activation of the genes under the control of the sigma-W factor. Can also cleave liberated signal peptides of PenP and Mpr, probably within in the cell membrane. This Bacillus subtilis (strain 168) protein is Regulator of sigma-W protease RasP.